The following is a 462-amino-acid chain: Alkaline ceramidase TOD1 (462 aa).

Topologically, residues 1 to 18 are cytoplasmic; sequence MGKFITTTLSPPLYARSK. A helical membrane pass occupies residues 19-39; that stretch reads LLCFSLLYLFSTIFLFLYVSL. At 40-462 the chain is on the lumenal side; sequence SRNQCIFRYS…CKNYLTDMWG (423 aa). N-linked (GlcNAc...) asparagine glycosylation is found at asparagine 121, asparagine 132, and asparagine 449.

This sequence belongs to the alkaline ceramidase family. As to expression, preferentially expressed in pollen grains, pollen tubes and silique guard cells, but barely detectable in roots, stems and leaves.

Its subcellular location is the golgi apparatus membrane. It catalyses the reaction an N-acylsphing-4-enine + H2O = sphing-4-enine + a fatty acid. It participates in lipid metabolism. In terms of biological role, endoplasmic reticulum ceramidase that catalyzes the hydrolysis of ceramides into sphingosine and free fatty acids at alkaline pH (e.g. pH 9.5). Inactive on phytoceramide. Involved in the regulation of turgor pressure in guard cells and pollen tubes. The polypeptide is Alkaline ceramidase TOD1 (Arabidopsis thaliana (Mouse-ear cress)).